The following is a 101-amino-acid chain: Movement protein (101 aa).

The chain crosses the membrane as a helical span at residues 30-50; sequence EVAILSFVALICFYLLYLWVL. The segment at 75–101 is disordered; sequence VDRSNPIPNIPAPPSQGNPGPFVPGTG.

Belongs to the mastrevirus movement protein family. As to quaternary structure, interacts with the capsid protein (CP). Part of a MP-CP-viral DNA complex.

It localises to the host membrane. Involved in the viral transport within, and between cells. This chain is Movement protein, found in Maize streak virus genotype A (isolate Kenya) (MSV).